A 505-amino-acid chain; its full sequence is Photosystem II CP47 reaction center protein (505 aa).

Residues G1–I19 lie on the Cytoplasmic side of the membrane. Positions 8, 22, 25, 99, and 113 each coordinate chlorophyll a. Residues A20–S35 traverse the membrane as a helical segment. The Lumenal portion of the chain corresponds to M36–H99. Residues I100–W114 form a helical membrane-spanning segment. Residues V115 to F138 are Cytoplasmic-facing. Residues G139–F155 traverse the membrane as a helical segment. H141, H156, H200, H201, and H215 together coordinate chlorophyll a. At H156–H201 the chain is on the lumenal side. The chain crosses the membrane as a helical span at residues I202–L217. Residues V218–T235 lie on the Cytoplasmic side of the membrane. Residues V236 to V251 traverse the membrane as a helical segment. The Lumenal portion of the chain corresponds to A252 to A455. Positions 454, 465, and 468 each coordinate chlorophyll a. A helical transmembrane segment spans residues V456–R471. Residues T472 to K505 lie on the Cytoplasmic side of the membrane.

This sequence belongs to the PsbB/PsbC family. PsbB subfamily. As to quaternary structure, PSII is composed of 1 copy each of membrane proteins PsbA, PsbB, PsbC, PsbD, PsbE, PsbF, PsbH, PsbI, PsbJ, PsbK, PsbL, PsbM, PsbT, PsbX, PsbY, PsbZ, Psb30/Ycf12, peripheral proteins PsbO, CyanoQ (PsbQ), PsbU, PsbV and a large number of cofactors. It forms dimeric complexes. It depends on Binds multiple chlorophylls. PSII binds additional chlorophylls, carotenoids and specific lipids. as a cofactor.

The protein resides in the cellular thylakoid membrane. One of the components of the core complex of photosystem II (PSII). It binds chlorophyll and helps catalyze the primary light-induced photochemical processes of PSII. PSII is a light-driven water:plastoquinone oxidoreductase, using light energy to abstract electrons from H(2)O, generating O(2) and a proton gradient subsequently used for ATP formation. This is Photosystem II CP47 reaction center protein from Thermostichus vulcanus (Synechococcus vulcanus).